A 286-amino-acid polypeptide reads, in one-letter code: Homoserine kinase (286 aa).

ATP is bound at residue 78–88 (PLARGLGSSSS).

The protein belongs to the GHMP kinase family. Homoserine kinase subfamily.

It localises to the cytoplasm. The enzyme catalyses L-homoserine + ATP = O-phospho-L-homoserine + ADP + H(+). It functions in the pathway amino-acid biosynthesis; L-threonine biosynthesis; L-threonine from L-aspartate: step 4/5. Its function is as follows. Catalyzes the ATP-dependent phosphorylation of L-homoserine to L-homoserine phosphate. This Streptococcus equi subsp. equi (strain 4047) protein is Homoserine kinase.